The sequence spans 431 residues: Guanine nucleotide exchange factor rei-2 (431 aa).

Polar residues predominate over residues 1–21 (MDETATSSEVTETFVSDPTTR). The segment at 1-28 (MDETATSSEVTETFVSDPTTRQFEEDGH) is disordered. Coiled-coil stretches lie at residues 149 to 171 (EVLN…AESL) and 214 to 247 (LEAQ…RISE). Positions 249 to 298 (IHEERSTGSLESAVSSDQEDQKSDFKSSESLPGNPPPYAPTAPPPYEDKY) are disordered. Residues 255–264 (TGSLESAVSS) show a composition bias toward polar residues. A compositionally biased stretch (pro residues) spans 281–293 (GNPPPYAPTAPPP).

It belongs to the SH3BP5 family. Interacts with rab-11.1. Binds preferentially to the GDP-bound form of rab-11.1.

In terms of biological role, guanine nucleotide exchange factor for Rab GTPase Rab-11.1. May spatially and temporally regulate the distribution of Rab-11.1 to target membranes during embryogenesis. May play a role in cytokinesis, probably by targeting rab-11.1 to the cleavage furrows. The chain is Guanine nucleotide exchange factor rei-2 from Caenorhabditis elegans.